Here is a 379-residue protein sequence, read N- to C-terminus: Homoserine O-succinyltransferase (379 aa).

The AB hydrolase-1 domain occupies asparagine 51 to leucine 360. Serine 157 (nucleophile) is an active-site residue. Position 227 (arginine 227) interacts with substrate. Active-site residues include aspartate 323 and histidine 356. Aspartate 357 provides a ligand contact to substrate.

Belongs to the AB hydrolase superfamily. MetX family. In terms of assembly, homodimer.

The protein resides in the cytoplasm. The enzyme catalyses L-homoserine + succinyl-CoA = O-succinyl-L-homoserine + CoA. Its pathway is amino-acid biosynthesis; L-methionine biosynthesis via de novo pathway; O-succinyl-L-homoserine from L-homoserine: step 1/1. In terms of biological role, transfers a succinyl group from succinyl-CoA to L-homoserine, forming succinyl-L-homoserine. The protein is Homoserine O-succinyltransferase of Pseudomonas fluorescens (strain ATCC BAA-477 / NRRL B-23932 / Pf-5).